We begin with the raw amino-acid sequence, 509 residues long: Activin receptor type-1 (509 aa).

The N-terminal stretch at 1–20 (MVDGVMILPVLVMIAFPFPS) is a signal peptide. Residues 21-123 (MEDEKPKVNP…FPGTQNFHLE (103 aa)) lie on the Extracellular side of the membrane. N-linked (GlcNAc...) asparagine glycosylation occurs at asparagine 102. Residues 124 to 146 (VGLIILSVVFAVCLLACLLGVAL) form a helical membrane-spanning segment. Residues 147 to 509 (RKFKRRNQER…NSLDKLKTDC (363 aa)) lie on the Cytoplasmic side of the membrane. Residues 178 to 207 (STLADLLDHSCTSGSGSGLPFLVQRTVARQ) form the GS domain. Residues 208-502 (ITLLECVGKG…KTLTKIDNSL (295 aa)) form the Protein kinase domain. Residues 214 to 222 (VGKGRYGEV) and lysine 235 contribute to the ATP site. Aspartate 336 (proton acceptor) is an active-site residue. The residue at position 501 (serine 501) is a Phosphoserine.

The protein belongs to the protein kinase superfamily. TKL Ser/Thr protein kinase family. TGFB receptor subfamily. As to quaternary structure, interacts with FKBP1A. Interacts with FCHO1. Interacts with CLU. Interacts with type II receptors AMHR2 and ACVR2A. Interacts with BMP7. Interacts with BMP9. Interacts with BMP6 (when glycosylated); the interaction may induce HAMP expression. Interacts with TSC22D1/TSC-22. Mg(2+) is required as a cofactor. Mn(2+) serves as cofactor.

Its subcellular location is the membrane. It catalyses the reaction L-threonyl-[receptor-protein] + ATP = O-phospho-L-threonyl-[receptor-protein] + ADP + H(+). The catalysed reaction is L-seryl-[receptor-protein] + ATP = O-phospho-L-seryl-[receptor-protein] + ADP + H(+). Bone morphogenetic protein (BMP) type I receptor that is involved in a wide variety of biological processes, including bone, heart, cartilage, nervous, and reproductive system development and regulation. As a type I receptor, forms heterotetrameric receptor complexes with the type II receptors AMHR2, ACVR2A ors ACVR2B. Upon binding of ligands such as BMP7 or BMP9 to the heteromeric complexes, type II receptors transphosphorylate ACVR1 intracellular domain. In turn, ACVR1 kinase domain is activated and subsequently phosphorylates SMAD1/5/8 proteins that transduce the signal. In addition to its role in mediating BMP pathway-specific signaling, suppresses TGFbeta/activin pathway signaling by interfering with the binding of activin to its type II receptor. Besides canonical SMAD signaling, can activate non-canonical signaling pathways. May promote the expression of HAMP, potentially via its interaction with BMP6. The protein is Activin receptor type-1 (ACVR1) of Bos taurus (Bovine).